The primary structure comprises 1496 residues: DENN domain-containing protein 4B (1496 aa).

An MABP domain is found at 44–203; sequence AEPITDVAVI…AVYLCYKVGL (160 aa). Positions 195-369 constitute a uDENN domain; sequence VYLCYKVGLA…NVPFPSPQRP (175 aa). The region spanning 390 to 526 is the cDENN domain; the sequence is PLPLSGASFL…PYKVLLATLT (137 aa). The 117-residue stretch at 528 to 644 folds into the dDENN domain; it reads LYQQLDQTYT…ECSFGSARHA (117 aa). A disordered region spans residues 720–744; that stretch reads QPGALPVPGPSRSAPSSPAPRRTKQ. Residues 729–739 show a composition bias toward low complexity; that stretch reads PSRSAPSSPAP. PPR repeat units lie at residues 775–811 and 812–846; these read WFLC…VVLP and DEVC…GIVP. Disordered stretches follow at residues 891–970, 995–1055, 1067–1119, and 1205–1227; these read LRER…ARGA, VPWH…TPRR, PSRH…GSEW, and SRPS…PVPG. Low complexity predominate over residues 896 to 912; sequence QQQQQQQQQQQQQQQEQ. Polar residues-rich tracts occupy residues 913–924 and 935–944; these read VSAHQEAGSSQA and RPLQRQTTWA. Ser-953 is subject to Phosphoserine. Over residues 1075–1090 the composition is skewed to pro residues; the sequence is RIPPPELPPDLPPPAR. Ser-1092 is subject to Phosphoserine. Low complexity predominate over residues 1105-1119; it reads GSTASESSASLGSEW.

It is found in the golgi apparatus. Functionally, guanine nucleotide exchange factor (GEF) which may activate RAB10. Promotes the exchange of GDP to GTP, converting inactive GDP-bound Rab proteins into their active GTP-bound form. This chain is DENN domain-containing protein 4B (DENND4B), found in Homo sapiens (Human).